The primary structure comprises 175 residues: Lipoprotein signal peptidase (175 aa).

The next 4 helical transmembrane spans lie at 25 to 45, 56 to 76, 81 to 101, and 110 to 130; these read LWMA…IVIV, VTGF…SFLA, WQRW…VWLL, and FCFA…DRVV. Active-site residues include aspartate 136 and aspartate 154. Residues 146-166 form a helical membrane-spanning segment; that stretch reads HWPAFNVADCAITVGAVLLIV.

The protein belongs to the peptidase A8 family.

It is found in the cell inner membrane. It carries out the reaction Release of signal peptides from bacterial membrane prolipoproteins. Hydrolyzes -Xaa-Yaa-Zaa-|-(S,diacylglyceryl)Cys-, in which Xaa is hydrophobic (preferably Leu), and Yaa (Ala or Ser) and Zaa (Gly or Ala) have small, neutral side chains.. It functions in the pathway protein modification; lipoprotein biosynthesis (signal peptide cleavage). This protein specifically catalyzes the removal of signal peptides from prolipoproteins. This Cupriavidus necator (strain ATCC 17699 / DSM 428 / KCTC 22496 / NCIMB 10442 / H16 / Stanier 337) (Ralstonia eutropha) protein is Lipoprotein signal peptidase.